The following is a 549-amino-acid chain: Membrane protein insertase YidC (549 aa).

The chain crosses the membrane as a helical span at residues 6-26 (NLLLIGLLLVSFMLWQSWMVD). A disordered region spans residues 35–55 (ATAESSVPASSGGDVPNQNDA). The next 4 membrane-spanning stretches (helical) occupy residues 349-369 (QFLH…TMIV), 424-444 (LGGC…YWTL), 462-482 (LSVK…MWYI), and 503-523 (PIVF…YWVV).

Belongs to the OXA1/ALB3/YidC family. Type 1 subfamily. In terms of assembly, interacts with the Sec translocase complex via SecD. Specifically interacts with transmembrane segments of nascent integral membrane proteins during membrane integration.

It localises to the cell inner membrane. Required for the insertion and/or proper folding and/or complex formation of integral membrane proteins into the membrane. Involved in integration of membrane proteins that insert both dependently and independently of the Sec translocase complex, as well as at least some lipoproteins. Aids folding of multispanning membrane proteins. The sequence is that of Membrane protein insertase YidC from Tolumonas auensis (strain DSM 9187 / NBRC 110442 / TA 4).